The sequence spans 278 residues: MQVRQSIHSDHARQLDTAGLRREFLIEHIFDADACTMTYSHIDRIIVGGVMPVHQAVTVGEDVGKQLGVSYFLERRELGAINIGGAGVVSVDGERYAIGHEEAIYIGKGARDIRFTSVDPAKPARFYYNSAPAHTTFPTRKITAAEASPQTIGDDATSNRRTINKYIVPDVLPTCQLTMGLTKLAEGNLWNTMPCHTHERRMEVYFYFDMDEETAVFHMMGQPQETRHILVHNEQAVISPSWSIHSGVGTKRYTFIWGMVGENQVFSDMDHVKVSELR.

Zn(2+)-binding residues include H196, H198, E203, and H245.

The protein belongs to the KduI family. The cofactor is Zn(2+).

It catalyses the reaction 5-dehydro-4-deoxy-D-glucuronate = 3-deoxy-D-glycero-2,5-hexodiulosonate. Its pathway is glycan metabolism; pectin degradation; 2-dehydro-3-deoxy-D-gluconate from pectin: step 4/5. Catalyzes the isomerization of 5-dehydro-4-deoxy-D-glucuronate to 3-deoxy-D-glycero-2,5-hexodiulosonate. The polypeptide is 4-deoxy-L-threo-5-hexosulose-uronate ketol-isomerase (kduI) (Dickeya dadantii (strain 3937) (Erwinia chrysanthemi (strain 3937))).